The chain runs to 352 residues: MADKKALIALSGGVDSAVAALLMQGQGYELTGVTMRLWPRSRCCDEKDIEDAAEICARLGIPYTVLDYREAFRRQVVDVFVAEYQAGRTPNPCARCNQFLKFDALLAEGEKLGATMLATGHYARLAETSSGTALLRGRDHAKDQSYFLFAIGAGILSRLRFPVGGMNKDEVRAMARKHGLPVAAKQDSQDICFVPDGDYRRFLEDYAGLDMAQEGEMVDSSGQVLGHHPGTLHFTVGQRKGLGGGSDQPRYVLALDPAQNRVIVGGEDELYRGVVSLAECNWLTDLSPGETHAVTVKLRYRSRAESAMLHLLSDARAELRFREPQRAVTPGQAAVCYQGERLLGGGWIQGTE.

ATP is bound by residues 9-16 (ALSGGVDS) and M35. C96 serves as the catalytic Nucleophile. A disulfide bridge links C96 with C192. G120 is an ATP binding site. An interaction with tRNA region spans residues 142–144 (KDQ). Catalysis depends on C192, which acts as the Cysteine persulfide intermediate. The interaction with tRNA stretch occupies residues 299–300 (RY).

The protein belongs to the MnmA/TRMU family.

It is found in the cytoplasm. The catalysed reaction is S-sulfanyl-L-cysteinyl-[protein] + uridine(34) in tRNA + AH2 + ATP = 2-thiouridine(34) in tRNA + L-cysteinyl-[protein] + A + AMP + diphosphate + H(+). Catalyzes the 2-thiolation of uridine at the wobble position (U34) of tRNA, leading to the formation of s(2)U34. The chain is tRNA-specific 2-thiouridylase MnmA from Acidithiobacillus ferrooxidans (strain ATCC 23270 / DSM 14882 / CIP 104768 / NCIMB 8455) (Ferrobacillus ferrooxidans (strain ATCC 23270)).